The primary structure comprises 281 residues: Secretory carrier-associated membrane protein 5 (281 aa).

Residues 1-49 form a disordered region; the sequence is MHHDPNPFDEGADDNPFSNGGGGGARRGGGGGGGGGGGGGKSQFSFGFG. The Cytoplasmic segment spans residues 1–139; that stretch reads MHHDPNPFDE…AQKLQYLAFA (139 aa). A compositionally biased stretch (gly residues) spans 19-49; the sequence is NGGGGGARRGGGGGGGGGGGGGKSQFSFGFG. Residues 76–102 adopt a coiled-coil conformation; the sequence is KELLQWEADLKRREADIRRREEALKSA. 4 helical membrane passes run 140–160, 167–187, 202–222, and 250–270; these read SWLG…VCWI, LFFL…LMWY, FGWF…AAIA, and IFYF…IWVL. The Cytoplasmic segment spans residues 271 to 281; the sequence is QKVYMYFRGHK.

It belongs to the SCAMP family.

It is found in the cell membrane. The protein resides in the cytoplasmic vesicle. The protein localises to the secretory vesicle membrane. In terms of biological role, probably involved in membrane trafficking. This chain is Secretory carrier-associated membrane protein 5 (SCAMP5), found in Oryza sativa subsp. japonica (Rice).